The chain runs to 493 residues: Serine/threonine-protein kinase chk-1 (493 aa).

Residues 26 to 286 (YRVIRTLGEG…IEQIKTDPWF (261 aa)) enclose the Protein kinase domain. ATP contacts are provided by residues 32-40 (LGEGAFGEV) and Lys56. Asp150 functions as the Proton acceptor in the catalytic mechanism. The disordered stretch occupies residues 308–348 (DENSPDCNISSTQQADAVSTAKRRHLETPDKVAHVERQNAS). Polar residues predominate over residues 312–324 (PDCNISSTQQADA). Basic and acidic residues predominate over residues 333 to 344 (LETPDKVAHVER).

It belongs to the protein kinase superfamily. CAMK Ser/Thr protein kinase family. NIM1 subfamily.

The protein localises to the cytoplasm. The protein resides in the nucleus. It carries out the reaction L-seryl-[protein] + ATP = O-phospho-L-seryl-[protein] + ADP + H(+). The enzyme catalyses L-threonyl-[protein] + ATP = O-phospho-L-threonyl-[protein] + ADP + H(+). In terms of biological role, serine/threonine-protein kinase which is required for checkpoint-mediated cell cycle arrest and activation of DNA repair in response to the presence of DNA damage or unreplicated DNA. May also negatively regulate cell cycle progression during unperturbed cell cycles. Required for checkpoint mediated cell cycle arrest in response to DNA damage in germline cells. Essential for embryogenesis. The sequence is that of Serine/threonine-protein kinase chk-1 (chk-1) from Caenorhabditis briggsae.